The chain runs to 236 residues: Lipoarabinomannan carrier protein LprG (236 aa).

The first 26 residues, 1–26 (MRTPRRHCRRIAVLAAVSIAATVVAG), serve as a signal peptide directing secretion. A lipid anchor (N-palmitoyl cysteine) is attached at C27. C27 is lipidated: S-diacylglycerol cysteine.

The protein belongs to the LppX/LprAFG lipoprotein family. In terms of processing, modified by Lgt on Cys-27 with an S-linked diacylglyceral, signal peptide is removed by LspA, Cys-27 is further modifed with a fatty acid on its amino group by Lnt yielding a triacylated protein.

The protein resides in the cell inner membrane. The protein localises to the secreted. Its subcellular location is the cell wall. Helps membrane protein Mb1445c (P55) transport triacylglycerides (TAG) across the inner cell membrane into the periplasm and probably ultimately to the outer membrane. Binds TAG in its hydrophobic cavity and transfers it between lipid bilayers. TAG probably regulates lipid metabolism and growth regulation and plays a structural role in the outer membrane. Binds di- and triacylated phosphatidyl-myo-inositol mannosides (PIMs), and glycolipid lipoglycan modulins lipoarabinomannan (LAM) and lipomannan (LM), facilitating their recognition by TLR2. Required for activity of drug efflux transporter Mb1445c. Required, probably with Mb1445c, for normal surface localization of LAM. Its function is as follows. Constitutes a host TLR2 agonist (toll-like receptor). In Mycobacterium bovis (strain ATCC BAA-935 / AF2122/97), this protein is Lipoarabinomannan carrier protein LprG.